The sequence spans 603 residues: Serine/threonine-protein kinase PLK1 (603 aa).

A disordered region spans residues 1-35 (MSAAVTAGKLARAPADPGKAGVPGVAAPGAPAAAP). Ser2 bears the N-acetylserine mark. Thr6 is modified (phosphothreonine). Low complexity predominate over residues 13–35 (APADPGKAGVPGVAAPGAPAAAP). Residue Lys19 forms a Glycyl lysine isopeptide (Lys-Gly) (interchain with G-Cter in ubiquitin) linkage. The Protein kinase domain maps to 53 to 305 (YVRGRFLGKG…INELLNDEFF (253 aa)). ATP-binding positions include 59-67 (LGKGGFAKC) and Lys82. At Ser103 the chain carries Phosphoserine. Glu131 contacts ATP. The residue at position 137 (Ser137) is a Phosphoserine. Residue Asp176 is the Proton acceptor of the active site. ATP is bound by residues 178–181 (KLGN) and Asp194. Residues 194 to 221 (DFGLATKVEYDGERKKTLCGTPNYIAPE) form an activation loop region. Thr210 is subject to Phosphothreonine; by AURKA. Thr214 carries the post-translational modification Phosphothreonine. Ser269 is modified (phosphoserine; by autocatalysis). At Ser335 the chain carries Phosphoserine. The D-box that targets the protein for proteasomal degradation in anaphase signature appears at 337–340 (RKPL). Residue Lys338 forms a Glycyl lysine isopeptide (Lys-Gly) (interchain with G-Cter in SUMO2) linkage. The segment at 338 to 364 (KPLTVLNKGLENPLPERPREKEEPVVR) is disordered. The span at 351-364 (LPERPREKEEPVVR) shows a compositional bias: basic and acidic residues. A phosphoserine mark is found at Ser375 and Ser450. Residues 410–488 (WVSKWVDYSD…LKYFRNYMSE (79 aa)) enclose the POLO box 1 domain. Lys492 is covalently cross-linked (Glycyl lysine isopeptide (Lys-Gly) (interchain with G-Cter in ubiquitin)). Residues 493–507 (AGANITPREGDELAR) form a linker region. Residue Thr498 is modified to Phosphothreonine. Residues 510-592 (YLRTWFRTRS…ARTMVDKLLS (83 aa)) form the POLO box 2 domain. An important for interaction with phosphorylated proteins region spans residues 538-540 (HTK).

Belongs to the protein kinase superfamily. Ser/Thr protein kinase family. CDC5/Polo subfamily. Interacts with CEP170. Interacts with EVI5. Interacts with FAM29A. Interacts with SLX4/BTBD12. Interacts with TTDN1. Interacts (via POLO-box domain) with the phosphorylated form of BUB1, CDC25C and CENPU. Interacts with KIF2A. Interacts with CYLD. Part of an astrin (SPAG5)-kinastrin (SKAP) complex containing KNSTRN, SPAG5, PLK1, DYNLL1 and SGO2. Interacts with BIRC6/bruce. Interacts with CDK1-phosphorylated FRY; this interaction occurs in mitotic cells, but not in interphase cells. FRY interaction facilitates AURKA-mediated PLK1 phosphorylation. Interacts with CDK1-phosphorylated DCTN6 during mitotic prometaphase; the interaction facilitates recruitment to kinetochores. Interacts with CEP68; the interaction phosphorylates CEP68. Interacts (via POLO-box domain) with DCTN1. Interacts with CEP20 in later G1, S, G2 and M phases of the cell cycle; this interaction recruits PLK1 to centrosomes, a step required for S phase progression. Interacts with KLHL22. Interacts (via POLO box domains) with NEDD9/HEF1 (via C-terminus). Interacts with FIRRM (via N-terminus region); required for maintaining, but not activating, PLK1 kinase activity. Interacts with FZR1. Interacts with SKA3; the interaction promotes the stability of PLK1; the interaction promotes the stability of PLK1. Interacts with the MTMR3:MTMR4 heterooligomer; brings CEP55 and PLK1 together during early mitosis, regulating the phosphorylation of CEP55 by PLK1 and its recruitment to the midbody where it can mediate cell abscission. Post-translationally, catalytic activity is enhanced by phosphorylation of Thr-210. Phosphorylation at Thr-210 is first detected on centrosomes in the G2 phase of the cell cycle, peaks in prometaphase and gradually disappears from centrosomes during anaphase. Dephosphorylation at Thr-210 at centrosomes is probably mediated by protein phosphatase 1C (PP1C), via interaction with PPP1R12A/MYPT1. Autophosphorylation and phosphorylation of Ser-137 may not be significant for the activation of PLK1 during mitosis, but may enhance catalytic activity during recovery after DNA damage checkpoint. Phosphorylated in vitro by STK10. In terms of processing, ubiquitinated by the anaphase promoting complex/cyclosome (APC/C) in anaphase and following DNA damage, leading to its degradation by the proteasome. Ubiquitination is mediated via its interaction with FZR1/CDH1. Ubiquitination and subsequent degradation prevents entry into mitosis and is essential to maintain an efficient G2 DNA damage checkpoint. Monoubiquitination at Lys-492 by the BCR(KLHL22) ubiquitin ligase complex does not lead to degradation: it promotes PLK1 dissociation from phosphoreceptor proteins and subsequent removal from kinetochores, allowing silencing of the spindle assembly checkpoint (SAC) and chromosome segregation. In terms of tissue distribution, placenta and colon.

Its subcellular location is the nucleus. The protein localises to the chromosome. It is found in the centromere. The protein resides in the kinetochore. It localises to the cytoplasm. Its subcellular location is the cytoskeleton. The protein localises to the microtubule organizing center. It is found in the centrosome. The protein resides in the spindle. It localises to the midbody. It catalyses the reaction L-seryl-[protein] + ATP = O-phospho-L-seryl-[protein] + ADP + H(+). It carries out the reaction L-threonyl-[protein] + ATP = O-phospho-L-threonyl-[protein] + ADP + H(+). Its activity is regulated as follows. Activated by phosphorylation of Thr-210 by AURKA; phosphorylation by AURKA is enhanced by BORA. Once activated, activity is stimulated by binding target proteins. Binding of target proteins has no effect on the non-activated kinase. Several inhibitors targeting PLKs are currently in development and are under investigation in a growing number of clinical trials, such as BI 2536, an ATP-competitive PLK1 inhibitor or BI 6727, a dihydropteridinone that specifically inhibits the catalytic activity of PLK1. Its function is as follows. Serine/threonine-protein kinase that performs several important functions throughout M phase of the cell cycle, including the regulation of centrosome maturation and spindle assembly, the removal of cohesins from chromosome arms, the inactivation of anaphase-promoting complex/cyclosome (APC/C) inhibitors, and the regulation of mitotic exit and cytokinesis. Polo-like kinase proteins act by binding and phosphorylating proteins that are already phosphorylated on a specific motif recognized by the POLO box domains. Phosphorylates BORA, BUB1B/BUBR1, CCNB1, CDC25C, CEP55, ECT2, ERCC6L, FBXO5/EMI1, FOXM1, KIF20A/MKLP2, CENPU, NEDD1, NINL, NPM1, NUDC, PKMYT1/MYT1, KIZ, MRE11, PPP1R12A/MYPT1, POLQ, PRC1, RACGAP1/CYK4, RAD51, RHNO1, SGO1, STAG2/SA2, TEX14, TOPORS, p73/TP73, TPT1, WEE1 and HNRNPU. Plays a key role in centrosome functions and the assembly of bipolar spindles by phosphorylating KIZ, NEDD1 and NINL. NEDD1 phosphorylation promotes subsequent targeting of the gamma-tubulin ring complex (gTuRC) to the centrosome, an important step for spindle formation. Phosphorylation of NINL component of the centrosome leads to NINL dissociation from other centrosomal proteins. Involved in mitosis exit and cytokinesis by phosphorylating CEP55, ECT2, KIF20A/MKLP2, CENPU, PRC1 and RACGAP1. Recruited at the central spindle by phosphorylating and docking PRC1 and KIF20A/MKLP2; creates its own docking sites on PRC1 and KIF20A/MKLP2 by mediating phosphorylation of sites subsequently recognized by the POLO box domains. Phosphorylates RACGAP1, thereby creating a docking site for the Rho GTP exchange factor ECT2 that is essential for the cleavage furrow formation. Promotes the central spindle recruitment of ECT2. Plays a central role in G2/M transition of mitotic cell cycle by phosphorylating CCNB1, CDC25C, FOXM1, CENPU, PKMYT1/MYT1, PPP1R12A/MYPT1 and WEE1. Part of a regulatory circuit that promotes the activation of CDK1 by phosphorylating the positive regulator CDC25C and inhibiting the negative regulators WEE1 and PKMYT1/MYT1. Also acts by mediating phosphorylation of cyclin-B1 (CCNB1) on centrosomes in prophase. Phosphorylates FOXM1, a key mitotic transcription regulator, leading to enhance FOXM1 transcriptional activity. Involved in kinetochore functions and sister chromatid cohesion by phosphorylating BUB1B/BUBR1, FBXO5/EMI1 and STAG2/SA2. PLK1 is high on non-attached kinetochores suggesting a role of PLK1 in kinetochore attachment or in spindle assembly checkpoint (SAC) regulation. Required for kinetochore localization of BUB1B. Regulates the dissociation of cohesin from chromosomes by phosphorylating cohesin subunits such as STAG2/SA2. Phosphorylates SGO1: required for spindle pole localization of isoform 3 of SGO1 and plays a role in regulating its centriole cohesion function. Mediates phosphorylation of FBXO5/EMI1, a negative regulator of the APC/C complex during prophase, leading to FBXO5/EMI1 ubiquitination and degradation by the proteasome. Acts as a negative regulator of p53 family members: phosphorylates TOPORS, leading to inhibit the sumoylation of p53/TP53 and simultaneously enhance the ubiquitination and subsequent degradation of p53/TP53. Phosphorylates the transactivation domain of the transcription factor p73/TP73, leading to inhibit p73/TP73-mediated transcriptional activation and pro-apoptotic functions. Phosphorylates BORA, and thereby promotes the degradation of BORA. Contributes to the regulation of AURKA function. Also required for recovery after DNA damage checkpoint and entry into mitosis. Phosphorylates MISP, leading to stabilization of cortical and astral microtubule attachments required for proper spindle positioning. Together with MEIKIN, acts as a regulator of kinetochore function during meiosis I: required both for mono-orientation of kinetochores on sister chromosomes and protection of centromeric cohesin from separase-mediated cleavage. Phosphorylates CEP68 and is required for its degradation. Regulates nuclear envelope breakdown during prophase by phosphorylating DCTN1 resulting in its localization in the nuclear envelope. Phosphorylates the heat shock transcription factor HSF1, promoting HSF1 nuclear translocation upon heat shock. Phosphorylates HSF1 also in the early mitotic period; this phosphorylation regulates HSF1 localization to the spindle pole, the recruitment of the SCF(BTRC) ubiquitin ligase complex induicing HSF1 degradation, and hence mitotic progression. Regulates mitotic progression by phosphorylating RIOK2. Through the phosphorylation of DZIP1 regulates the localization during mitosis of the BBSome, a ciliary protein complex involved in cilium biogenesis. Regulates DNA repair during mitosis by mediating phosphorylation of POLQ and RHNO1, thereby promoting POLQ recruitment to DNA damage sites. Phosphorylates ATXN10 which may play a role in the regulation of cytokinesis and may stimulate the proteasome-mediated degradation of ATXN10. This chain is Serine/threonine-protein kinase PLK1 (PLK1), found in Homo sapiens (Human).